The following is a 295-amino-acid chain: 4-hydroxy-tetrahydrodipicolinate synthase (295 aa).

A pyruvate-binding site is contributed by Thr-46. Catalysis depends on Tyr-134, which acts as the Proton donor/acceptor. The active-site Schiff-base intermediate with substrate is Lys-162. Ile-205 lines the pyruvate pocket.

The protein belongs to the DapA family. Homotetramer; dimer of dimers.

It is found in the cytoplasm. It catalyses the reaction L-aspartate 4-semialdehyde + pyruvate = (2S,4S)-4-hydroxy-2,3,4,5-tetrahydrodipicolinate + H2O + H(+). Its pathway is amino-acid biosynthesis; L-lysine biosynthesis via DAP pathway; (S)-tetrahydrodipicolinate from L-aspartate: step 3/4. Functionally, catalyzes the condensation of (S)-aspartate-beta-semialdehyde [(S)-ASA] and pyruvate to 4-hydroxy-tetrahydrodipicolinate (HTPA). The sequence is that of 4-hydroxy-tetrahydrodipicolinate synthase from Anaeromyxobacter sp. (strain K).